Here is a 146-residue protein sequence, read N- to C-terminus: UPF0756 membrane protein PTH_1817 (146 aa).

Helical transmembrane passes span Leu6–Ile26, Met46–Trp66, Ile69–Thr89, and Ile105–Val125.

The protein belongs to the UPF0756 family.

The protein resides in the cell membrane. In Pelotomaculum thermopropionicum (strain DSM 13744 / JCM 10971 / SI), this protein is UPF0756 membrane protein PTH_1817.